Reading from the N-terminus, the 336-residue chain is Zinc-type alcohol dehydrogenase-like protein SE_1777 (336 aa).

It belongs to the zinc-containing alcohol dehydrogenase family. Quinone oxidoreductase subfamily.

The chain is Zinc-type alcohol dehydrogenase-like protein SE_1777 from Staphylococcus epidermidis (strain ATCC 12228 / FDA PCI 1200).